The primary structure comprises 953 residues: Isoleucine--tRNA ligase (953 aa).

Residues 58–68 (PYANGSIHIGH) carry the 'HIGH' region motif. L-isoleucyl-5'-AMP is bound at residue Glu-577. Positions 618 to 622 (KMSKS) match the 'KMSKS' region motif. Lys-621 provides a ligand contact to ATP. Zn(2+) contacts are provided by Cys-916, Cys-919, Cys-936, and Cys-939.

This sequence belongs to the class-I aminoacyl-tRNA synthetase family. IleS type 1 subfamily. In terms of assembly, monomer. The cofactor is Zn(2+).

Its subcellular location is the cytoplasm. It catalyses the reaction tRNA(Ile) + L-isoleucine + ATP = L-isoleucyl-tRNA(Ile) + AMP + diphosphate. Its function is as follows. Catalyzes the attachment of isoleucine to tRNA(Ile). As IleRS can inadvertently accommodate and process structurally similar amino acids such as valine, to avoid such errors it has two additional distinct tRNA(Ile)-dependent editing activities. One activity is designated as 'pretransfer' editing and involves the hydrolysis of activated Val-AMP. The other activity is designated 'posttransfer' editing and involves deacylation of mischarged Val-tRNA(Ile). This chain is Isoleucine--tRNA ligase, found in Aeromonas salmonicida (strain A449).